Consider the following 239-residue polypeptide: Ribonuclease HII (239 aa).

One can recognise an RNase H type-2 domain in the interval 30–221 (GPVAGVDEVG…VRRLVTAGTP (192 aa)). A divalent metal cation is bound by residues D36, E37, and D130.

Belongs to the RNase HII family. The cofactor is Mn(2+). Mg(2+) serves as cofactor.

Its subcellular location is the cytoplasm. It carries out the reaction Endonucleolytic cleavage to 5'-phosphomonoester.. Its function is as follows. Endonuclease that specifically degrades the RNA of RNA-DNA hybrids. The polypeptide is Ribonuclease HII (Mycobacterium sp. (strain KMS)).